The primary structure comprises 192 residues: uncharacterized protein (192 aa).

One can recognise a Nudix hydrolase domain in the interval 29–160 (HRQAAVLIPI…PLDIYRRGDS (132 aa)). The Nudix box signature appears at 67-89 (GAVDDTDTSVIAAALREAEEEVA). Residues Glu83 and Glu87 each coordinate Mg(2+).

Belongs to the Nudix hydrolase family. PCD1 subfamily. Requires Mn(2+) as cofactor. The cofactor is Mg(2+).

Probably mediates the hydrolysis of some nucleoside diphosphate derivatives. This is an uncharacterized protein from Escherichia coli O7:K1 (strain IAI39 / ExPEC).